A 277-amino-acid polypeptide reads, in one-letter code: Phosphonates import ATP-binding protein PhnC 2 (277 aa).

In terms of domain architecture, ABC transporter spans 5–253; it reads IHVQGLNKTF…FLNDLYGADA (249 aa). 37–44 is an ATP binding site; it reads GASGSGKS.

It belongs to the ABC transporter superfamily. Phosphonates importer (TC 3.A.1.9.1) family. In terms of assembly, the complex is composed of two ATP-binding proteins (PhnC), two transmembrane proteins (PhnE) and a solute-binding protein (PhnD).

The protein localises to the cell inner membrane. The enzyme catalyses phosphonate(out) + ATP + H2O = phosphonate(in) + ADP + phosphate + H(+). Part of the ABC transporter complex PhnCDE involved in phosphonates import. Responsible for energy coupling to the transport system. This Pseudomonas syringae pv. syringae (strain B728a) protein is Phosphonates import ATP-binding protein PhnC 2.